We begin with the raw amino-acid sequence, 100 residues long: NADH-quinone oxidoreductase subunit K (100 aa).

The next 3 membrane-spanning stretches (helical) occupy residues 4–24 (LTHGLILAAILFVLGLTGLVI), 28–48 (LLFMLISLEIMINAAALAFVV), and 60–80 (IMYILAISLAAAEASIGLALL).

The protein belongs to the complex I subunit 4L family. NDH-1 is composed of 13 different subunits. Subunits NuoA, H, J, K, L, M, N constitute the membrane sector of the complex.

The protein resides in the cell inner membrane. The enzyme catalyses a quinone + NADH + 5 H(+)(in) = a quinol + NAD(+) + 4 H(+)(out). In terms of biological role, NDH-1 shuttles electrons from NADH, via FMN and iron-sulfur (Fe-S) centers, to quinones in the respiratory chain. The immediate electron acceptor for the enzyme in this species is believed to be ubiquinone. Couples the redox reaction to proton translocation (for every two electrons transferred, four hydrogen ions are translocated across the cytoplasmic membrane), and thus conserves the redox energy in a proton gradient. The sequence is that of NADH-quinone oxidoreductase subunit K from Klebsiella pneumoniae (strain 342).